The chain runs to 743 residues: Phosphoribosylformylglycinamidine synthase subunit PurL (743 aa).

His-54 is an active-site residue. The ATP site is built by Tyr-57 and Lys-96. Glu-98 lines the Mg(2+) pocket. Residues Ser-99–His-102 and Arg-121 each bind substrate. The active-site Proton acceptor is His-100. Residue Asp-122 coordinates Mg(2+). Substrate is bound at residue Gln-245. Asp-273 serves as a coordination point for Mg(2+). Residue Glu-317 to Gln-319 coordinates substrate. Positions 501 and 538 each coordinate ATP. Asn-539 contributes to the Mg(2+) binding site. Ser-541 contacts substrate.

Belongs to the FGAMS family. In terms of assembly, monomer. Part of the FGAM synthase complex composed of 1 PurL, 1 PurQ and 2 PurS subunits.

The protein localises to the cytoplasm. The enzyme catalyses N(2)-formyl-N(1)-(5-phospho-beta-D-ribosyl)glycinamide + L-glutamine + ATP + H2O = 2-formamido-N(1)-(5-O-phospho-beta-D-ribosyl)acetamidine + L-glutamate + ADP + phosphate + H(+). It functions in the pathway purine metabolism; IMP biosynthesis via de novo pathway; 5-amino-1-(5-phospho-D-ribosyl)imidazole from N(2)-formyl-N(1)-(5-phospho-D-ribosyl)glycinamide: step 1/2. Part of the phosphoribosylformylglycinamidine synthase complex involved in the purines biosynthetic pathway. Catalyzes the ATP-dependent conversion of formylglycinamide ribonucleotide (FGAR) and glutamine to yield formylglycinamidine ribonucleotide (FGAM) and glutamate. The FGAM synthase complex is composed of three subunits. PurQ produces an ammonia molecule by converting glutamine to glutamate. PurL transfers the ammonia molecule to FGAR to form FGAM in an ATP-dependent manner. PurS interacts with PurQ and PurL and is thought to assist in the transfer of the ammonia molecule from PurQ to PurL. The polypeptide is Phosphoribosylformylglycinamidine synthase subunit PurL (Halalkalibacterium halodurans (strain ATCC BAA-125 / DSM 18197 / FERM 7344 / JCM 9153 / C-125) (Bacillus halodurans)).